We begin with the raw amino-acid sequence, 87 residues long: Phosphoribosyl-ATP pyrophosphatase (87 aa).

Belongs to the PRA-PH family.

The protein resides in the cytoplasm. It catalyses the reaction 1-(5-phospho-beta-D-ribosyl)-ATP + H2O = 1-(5-phospho-beta-D-ribosyl)-5'-AMP + diphosphate + H(+). It functions in the pathway amino-acid biosynthesis; L-histidine biosynthesis; L-histidine from 5-phospho-alpha-D-ribose 1-diphosphate: step 2/9. In Paenarthrobacter aurescens (strain TC1), this protein is Phosphoribosyl-ATP pyrophosphatase.